We begin with the raw amino-acid sequence, 101 residues long: NAD(P)H-quinone oxidoreductase subunit 4L, chloroplastic (101 aa).

3 helical membrane-spanning segments follow: residues 2–22 (ILEH…YGLI), 32–52 (MCLE…SDFF), and 61–81 (IFSI…PAIL).

It belongs to the complex I subunit 4L family. NDH is composed of at least 16 different subunits, 5 of which are encoded in the nucleus.

Its subcellular location is the plastid. The protein localises to the chloroplast thylakoid membrane. The enzyme catalyses a plastoquinone + NADH + (n+1) H(+)(in) = a plastoquinol + NAD(+) + n H(+)(out). The catalysed reaction is a plastoquinone + NADPH + (n+1) H(+)(in) = a plastoquinol + NADP(+) + n H(+)(out). NDH shuttles electrons from NAD(P)H:plastoquinone, via FMN and iron-sulfur (Fe-S) centers, to quinones in the photosynthetic chain and possibly in a chloroplast respiratory chain. The immediate electron acceptor for the enzyme in this species is believed to be plastoquinone. Couples the redox reaction to proton translocation, and thus conserves the redox energy in a proton gradient. The polypeptide is NAD(P)H-quinone oxidoreductase subunit 4L, chloroplastic (Platanus occidentalis (Sycamore)).